Consider the following 156-residue polypeptide: Ribosomal RNA large subunit methyltransferase H (156 aa).

S-adenosyl-L-methionine-binding positions include leucine 73, glycine 104, and 123 to 128; that span reads LSALTL.

The protein belongs to the RNA methyltransferase RlmH family. In terms of assembly, homodimer.

Its subcellular location is the cytoplasm. The enzyme catalyses pseudouridine(1915) in 23S rRNA + S-adenosyl-L-methionine = N(3)-methylpseudouridine(1915) in 23S rRNA + S-adenosyl-L-homocysteine + H(+). Functionally, specifically methylates the pseudouridine at position 1915 (m3Psi1915) in 23S rRNA. The sequence is that of Ribosomal RNA large subunit methyltransferase H from Erwinia tasmaniensis (strain DSM 17950 / CFBP 7177 / CIP 109463 / NCPPB 4357 / Et1/99).